A 217-amino-acid polypeptide reads, in one-letter code: Phosphatidylserine decarboxylase proenzyme (217 aa).

Catalysis depends on Ser-183, which acts as the Schiff-base intermediate with substrate; via pyruvic acid. The residue at position 183 (Ser-183) is a Pyruvic acid (Ser); by autocatalysis.

It belongs to the phosphatidylserine decarboxylase family. PSD-A subfamily. In terms of assembly, heterodimer of a large membrane-associated beta subunit and a small pyruvoyl-containing alpha subunit. Requires pyruvate as cofactor. Is synthesized initially as an inactive proenzyme. Formation of the active enzyme involves a self-maturation process in which the active site pyruvoyl group is generated from an internal serine residue via an autocatalytic post-translational modification. Two non-identical subunits are generated from the proenzyme in this reaction, and the pyruvate is formed at the N-terminus of the alpha chain, which is derived from the carboxyl end of the proenzyme. The post-translation cleavage follows an unusual pathway, termed non-hydrolytic serinolysis, in which the side chain hydroxyl group of the serine supplies its oxygen atom to form the C-terminus of the beta chain, while the remainder of the serine residue undergoes an oxidative deamination to produce ammonia and the pyruvoyl prosthetic group on the alpha chain.

Its subcellular location is the cell membrane. The catalysed reaction is a 1,2-diacyl-sn-glycero-3-phospho-L-serine + H(+) = a 1,2-diacyl-sn-glycero-3-phosphoethanolamine + CO2. The protein operates within phospholipid metabolism; phosphatidylethanolamine biosynthesis; phosphatidylethanolamine from CDP-diacylglycerol: step 2/2. In terms of biological role, catalyzes the formation of phosphatidylethanolamine (PtdEtn) from phosphatidylserine (PtdSer). The polypeptide is Phosphatidylserine decarboxylase proenzyme (Cupriavidus metallidurans (strain ATCC 43123 / DSM 2839 / NBRC 102507 / CH34) (Ralstonia metallidurans)).